The following is a 491-amino-acid chain: Immediate early protein IE1 (491 aa).

Residues 1 to 11 (MESSAKRKMDP) show a composition bias toward basic and acidic residues. The interval 1-24 (MESSAKRKMDPDNPDEGPSSKVPR) is nuclear localization signal. The interval 1–30 (MESSAKRKMDPDNPDEGPSSKVPRPETPVT) is disordered. The segment at 132-346 (ILDKVHEPFE…SVMKRRIEEI (215 aa)) is interaction with host PML, interference with PML sumoylation and disruption of PML-associated nuclear bodies. Residues 373-445 (AIAEESDEEE…EEGAQEERED (73 aa)) form an interaction with host STAT2 region. The modulation of STAT3/STAT1 signaling stretch occupies residues 410 to 420 (ATIPLSSVIVA). Positions 410 to 445 (ATIPLSSVIVAENSDQEESEQSDEEEEEGAQEERED) are interaction with host STAT3. An acidic region spans residues 421–472 (ENSDQEESEQSDEEEEEGAQEEREDTVSVKSEPVSEIEEVAPEEEEDGAEEP). Residues 421-491 (ENSDQEESEQ…PMVTRSKADQ (71 aa)) are disordered. Residues 423 to 444 (SDQEESEQSDEEEEEGAQEERE) show a composition bias toward acidic residues. Positions 449–452 (VKSE) are interaction with host SUMO1. Lys450 participates in a covalent cross-link: Glycyl lysine isopeptide (Lys-Gly) (interchain with G-Cter in SUMO). Over residues 455–470 (SEIEEVAPEEEEDGAE) the composition is skewed to acidic residues. A chromosome-tethering domain (CTD), binding to histones region spans residues 475–491 (SGGKSTHPMVTRSKADQ).

The protein belongs to the HHV-5 IE1 protein family. As to quaternary structure, forms homodimers. Interacts with human p53/TP53; this interaction inhibits p53/TP53-dependent transactivation activity. Interacts with host STAT1. Interacts with host STAT2; this interaction promotes viral growth and counteracts the antiviral interferon response. May also interact with the host STAT1-STAT2 heterodimer. Interacts with host STAT3; this interaction leads to STAT3 nuclear accumulation and disruption of IL6-induced STAT3 phosphorylation. Interacts with host PML; this interaction inhibits host PML de novo sumoylation and probably inhibits PML regulation of type I and type II interferon-induced gene expression. Interacts with host DAXX. Interacts with host SP100. Interacts with host E2F1. Interacts with host RB1. Interacts with host HDAC1; this interaction inhibits histone deacetylation and promotes viral transcription. Interacts with host HDAC2; this interaction inhibits histone deacetylation and promotes viral transcription. Interacts with host HDAC3; this interaction inhibits histone deacetylation and promotes viral transcription. Interacts with host PLSCR1; this interaction inhibits IE1 transactivating activity. Sumoylated by host PML. Sumoylation abolishes the interaction with host STAT2 and thus the IE1-mediated repression of interferon-stimulated genes.

It is found in the host nucleus. Its function is as follows. Plays an important role in transactivating viral early genes as well as activating its own promoter, probably by altering the viral chromatin structure. Expression of IE1 and IE2 proteins is critical for the establishment of lytic infection and reactivation from viral latency. Disrupts PML-associated ND10 nuclear bodies by interfering with host PML and SP100 sumoylation thereby altering the regulation of type I and type II interferon-induced gene expression. Promotes efficient viral growth by interacting with and directing host SP100 to degradation, leading to enhanced acetylation level of histones. In addition, functions in counteracting the host innate antiviral response. Inhibits the type I interferon pathway by directly interacting with and sequestrating host STAT2. Also targets type II interferon pathway by repressing IL6- and STAT3 target genes. Repression of STAT3 genes is due to STAT3 nuclear accumulation and disruption of IL6-induced STAT3 phosphorylation by IE1. This repression is followed by phosphorylation and activation of STAT1. Inhibits host ISG transcription by sequestering host ISGF3 in a PML- and STAT2- binding dependent manner. Alters host cell cycle progression, probably through its interaction with host E2F1 or RB1 that overcomes the RB1-mediated repression of E2F-responsive promoters. This chain is Immediate early protein IE1 (UL123), found in Human cytomegalovirus (strain AD169) (HHV-5).